The following is a 670-amino-acid chain: CLK4-associating serine/arginine rich protein (670 aa).

A Phosphoserine modification is found at Ser-101. 2 disordered regions span residues 171-232 and 258-670; these read TVAE…GMAD and EKAM…HYRH. Over residues 182-214 the composition is skewed to acidic residues; that stretch reads PEEEESPAEEESNSDEDEVIPDIDVEVDVDELN. Over residues 265-283 the composition is skewed to basic residues; the sequence is RRSRRQRREFREKRLRGRK. Phosphoserine is present on residues Ser-285 and Ser-294. Residues 290 to 313 are compositionally biased toward basic and acidic residues; the sequence is ARRDSPTYDPYKRSPSESSSESRS. Thr-327 bears the Phosphothreonine mark. Residues Ser-331 and Ser-335 each carry the phosphoserine modification. The span at 340 to 355 shows a compositional bias: low complexity; it reads AAAAAAAAASGAATGK. Positions 356 to 365 are enriched in pro residues; the sequence is PPAPPQPGGP. A compositionally biased stretch (low complexity) spans 378–400; it reads STSSSSSSASRTSSSRSRSSSSS. Basic residues-rich tracts occupy residues 411-443 and 481-491; these read SGRH…RRHS and RGGRGPRHHSS. Over residues 492–529 the composition is skewed to low complexity; that stretch reads SRSSWSLSPSRSRSLTRSRSPSLSRSRSLSRSRSQSHS. Ser-543 carries the post-translational modification Phosphoserine. Thr-569 is modified (phosphothreonine). A coiled-coil region spans residues 581–643; the sequence is ALNRQFKADK…ERQYSRQSRS (63 aa). Basic and acidic residues-rich tracts occupy residues 586 to 613 and 621 to 637; these read FKAD…ELRA and KERE…ERQY. The span at 638–647 shows a compositional bias: low complexity; sequence SRQSRSPSPR. The span at 655–670 shows a compositional bias: basic residues; sequence SRRRSRSRSRSPHYRH.

It belongs to the splicing factor SR family. Probably interacts with CLK4. In terms of processing, phosphorylated in vitro by CLK4.

The protein localises to the nucleus. Functionally, probably functions as an alternative splicing regulator. May regulate the mRNA splicing of genes such as CLK1. May act by regulating members of the CLK kinase family. In Bos taurus (Bovine), this protein is CLK4-associating serine/arginine rich protein (CLASRP).